A 245-amino-acid polypeptide reads, in one-letter code: 1-(5-phosphoribosyl)-5-[(5-phosphoribosylamino)methylideneamino] imidazole-4-carboxamide isomerase (245 aa).

D7 functions as the Proton acceptor in the catalytic mechanism. Catalysis depends on D129, which acts as the Proton donor.

This sequence belongs to the HisA/HisF family.

It localises to the cytoplasm. It catalyses the reaction 1-(5-phospho-beta-D-ribosyl)-5-[(5-phospho-beta-D-ribosylamino)methylideneamino]imidazole-4-carboxamide = 5-[(5-phospho-1-deoxy-D-ribulos-1-ylimino)methylamino]-1-(5-phospho-beta-D-ribosyl)imidazole-4-carboxamide. It participates in amino-acid biosynthesis; L-histidine biosynthesis; L-histidine from 5-phospho-alpha-D-ribose 1-diphosphate: step 4/9. This chain is 1-(5-phosphoribosyl)-5-[(5-phosphoribosylamino)methylideneamino] imidazole-4-carboxamide isomerase, found in Escherichia coli O6:K15:H31 (strain 536 / UPEC).